We begin with the raw amino-acid sequence, 878 residues long: Aminopeptidase M1-A (878 aa).

Positions 105–212 are required for membrane association; that stretch reads VGEGTLVIAF…MSTYLVAVIV (108 aa). Residues Glu-145 and 278-282 contribute to the substrate site; that span reads GAMEN. His-314 contacts Zn(2+). Catalysis depends on Glu-315, which acts as the Proton acceptor. His-318 and Glu-337 together coordinate Zn(2+). Residues 727-728 carry the Dileucine internalization motif motif; that stretch reads LL.

Belongs to the peptidase M1 family. Homodimer. The cofactor is Zn(2+).

Its subcellular location is the membrane. It is found in the microsome membrane. The protein resides in the cytoplasm. The enzyme catalyses Release of an N-terminal amino acid, Xaa-|-Yaa- from a peptide, amide or arylamide. Xaa is preferably Ala, but may be most amino acids including Pro (slow action). When a terminal hydrophobic residue is followed by a prolyl residue, the two may be released as an intact Xaa-Pro dipeptide.. This is Aminopeptidase M1-A from Oryza sativa subsp. japonica (Rice).